A 237-amino-acid polypeptide reads, in one-letter code: NAD(P)H-quinone oxidoreductase subunit K (237 aa).

The [4Fe-4S] cluster site is built by Cys52, Cys53, Cys117, and Cys148.

The protein belongs to the complex I 20 kDa subunit family. NDH-1 can be composed of about 15 different subunits; different subcomplexes with different compositions have been identified which probably have different functions. The cofactor is [4Fe-4S] cluster.

It localises to the cellular thylakoid membrane. The catalysed reaction is a plastoquinone + NADH + (n+1) H(+)(in) = a plastoquinol + NAD(+) + n H(+)(out). It catalyses the reaction a plastoquinone + NADPH + (n+1) H(+)(in) = a plastoquinol + NADP(+) + n H(+)(out). Its function is as follows. NDH-1 shuttles electrons from an unknown electron donor, via FMN and iron-sulfur (Fe-S) centers, to quinones in the respiratory and/or the photosynthetic chain. The immediate electron acceptor for the enzyme in this species is believed to be plastoquinone. Couples the redox reaction to proton translocation, and thus conserves the redox energy in a proton gradient. Cyanobacterial NDH-1 also plays a role in inorganic carbon-concentration. In Thermosynechococcus vestitus (strain NIES-2133 / IAM M-273 / BP-1), this protein is NAD(P)H-quinone oxidoreductase subunit K.